A 224-amino-acid chain; its full sequence is Octanoyltransferase (224 aa).

The BPL/LPL catalytic domain occupies 38–213 (AETTDEVWLL…QFVRAAGFQS (176 aa)). Substrate is bound by residues 77 to 84 (RGGQVTYH), 144 to 146 (SLG), and 157 to 159 (GLA). C175 serves as the catalytic Acyl-thioester intermediate.

It belongs to the LipB family.

It localises to the cytoplasm. The catalysed reaction is octanoyl-[ACP] + L-lysyl-[protein] = N(6)-octanoyl-L-lysyl-[protein] + holo-[ACP] + H(+). It functions in the pathway protein modification; protein lipoylation via endogenous pathway; protein N(6)-(lipoyl)lysine from octanoyl-[acyl-carrier-protein]: step 1/2. Functionally, catalyzes the transfer of endogenously produced octanoic acid from octanoyl-acyl-carrier-protein onto the lipoyl domains of lipoate-dependent enzymes. Lipoyl-ACP can also act as a substrate although octanoyl-ACP is likely to be the physiological substrate. The protein is Octanoyltransferase of Hahella chejuensis (strain KCTC 2396).